A 126-amino-acid chain; its full sequence is Glycine cleavage system H protein (126 aa).

Residues 22–104 form the Lipoyl-binding domain; sequence TVTIGVTDFA…YGEGWMIKIK (83 aa). Lys63 carries the post-translational modification N6-lipoyllysine.

Belongs to the GcvH family. As to quaternary structure, the glycine cleavage system is composed of four proteins: P, T, L and H. (R)-lipoate serves as cofactor.

Functionally, the glycine cleavage system catalyzes the degradation of glycine. The H protein shuttles the methylamine group of glycine from the P protein to the T protein. The sequence is that of Glycine cleavage system H protein from Christiangramia forsetii (strain DSM 17595 / CGMCC 1.15422 / KT0803) (Gramella forsetii).